Reading from the N-terminus, the 369-residue chain is Chorismate synthase (369 aa).

Positions 48 and 54 each coordinate NADP(+). FMN is bound by residues 125–127 (RSS), 238–239 (NA), G278, 293–297 (KPTSS), and R319.

Belongs to the chorismate synthase family. As to quaternary structure, homotetramer. The cofactor is FMNH2.

The catalysed reaction is 5-O-(1-carboxyvinyl)-3-phosphoshikimate = chorismate + phosphate. The protein operates within metabolic intermediate biosynthesis; chorismate biosynthesis; chorismate from D-erythrose 4-phosphate and phosphoenolpyruvate: step 7/7. In terms of biological role, catalyzes the anti-1,4-elimination of the C-3 phosphate and the C-6 proR hydrogen from 5-enolpyruvylshikimate-3-phosphate (EPSP) to yield chorismate, which is the branch point compound that serves as the starting substrate for the three terminal pathways of aromatic amino acid biosynthesis. This reaction introduces a second double bond into the aromatic ring system. This Burkholderia mallei (strain ATCC 23344) protein is Chorismate synthase.